The primary structure comprises 217 residues: MTAPLTLALSKGRIFEETLPLLAAAGVQVAEDPETSRKLILPTTDPNLRVIIVRASDVPTYVEYGAADFGVAGKDVLVEHGGSGLYQPIDLNIARCRMSVAVPAGFDYANAVRQGARLRVATKYVETAREHFAAKGVHVDLIKLYGSMELAPLVGLADAIVDLVSSGGTLKANNLVEVEEIMAISSRLVVNQAALKLKRAALKPILDAFERASQNGN.

It belongs to the ATP phosphoribosyltransferase family. Short subfamily. As to quaternary structure, heteromultimer composed of HisG and HisZ subunits.

Its subcellular location is the cytoplasm. It carries out the reaction 1-(5-phospho-beta-D-ribosyl)-ATP + diphosphate = 5-phospho-alpha-D-ribose 1-diphosphate + ATP. The protein operates within amino-acid biosynthesis; L-histidine biosynthesis; L-histidine from 5-phospho-alpha-D-ribose 1-diphosphate: step 1/9. Its function is as follows. Catalyzes the condensation of ATP and 5-phosphoribose 1-diphosphate to form N'-(5'-phosphoribosyl)-ATP (PR-ATP). Has a crucial role in the pathway because the rate of histidine biosynthesis seems to be controlled primarily by regulation of HisG enzymatic activity. This is ATP phosphoribosyltransferase from Burkholderia ambifaria (strain MC40-6).